Consider the following 115-residue polypeptide: ATP synthase subunit g, mitochondrial (115 aa).

The residue at position 1 (Met1) is an N-acetylmethionine. Phosphoserine is present on residues Ser3 and Ser62.

Belongs to the ATPase g subunit family. As to quaternary structure, F-type ATPases have 2 components, CF(1) - the catalytic core - and CF(0) - the membrane proton channel. In yeast, the dimeric form of ATP synthase consists of 17 polypeptides: alpha, beta, gamma, delta, epsilon, 4 (B), 5 (OSCP), 6 (A), 8, 9 (C), d, E (Tim11), f, g, h, i/j and k. In terms of processing, phosphorylation on Ser-62 impairs ATP synthase dimerization.

It is found in the mitochondrion membrane. Mitochondrial membrane ATP synthase (F(1)F(0) ATP synthase or Complex V) produces ATP from ADP in the presence of a proton gradient across the membrane which is generated by electron transport complexes of the respiratory chain. F-type ATPases consist of two structural domains, F(1) - containing the extramembraneous catalytic core, and F(0) - containing the membrane proton channel, linked together by a central stalk and a peripheral stalk. During catalysis, ATP synthesis in the catalytic domain of F(1) is coupled via a rotary mechanism of the central stalk subunits to proton translocation. Part of the complex F(0) domain. Minor subunit located with subunit a in the membrane. This is ATP synthase subunit g, mitochondrial (ATP20) from Saccharomyces cerevisiae (strain ATCC 204508 / S288c) (Baker's yeast).